Reading from the N-terminus, the 349-residue chain is Protein-glutamate methylesterase/protein-glutamine glutaminase (349 aa).

A Response regulatory domain is found at 5-122 (RVLSVDDSAL…REGMLAYSEM (118 aa)). Asp56 carries the 4-aspartylphosphate modification. One can recognise a CheB-type methylesterase domain in the interval 152–344 (LLSSEKLIAI…QQMLAKISAG (193 aa)). Catalysis depends on residues Ser164, His190, and Asp286.

It belongs to the CheB family. Phosphorylated by CheA. Phosphorylation of the N-terminal regulatory domain activates the methylesterase activity.

It localises to the cytoplasm. The enzyme catalyses [protein]-L-glutamate 5-O-methyl ester + H2O = L-glutamyl-[protein] + methanol + H(+). It carries out the reaction L-glutaminyl-[protein] + H2O = L-glutamyl-[protein] + NH4(+). Its function is as follows. Involved in chemotaxis. Part of a chemotaxis signal transduction system that modulates chemotaxis in response to various stimuli. Catalyzes the demethylation of specific methylglutamate residues introduced into the chemoreceptors (methyl-accepting chemotaxis proteins or MCP) by CheR. Also mediates the irreversible deamidation of specific glutamine residues to glutamic acid. This Salmonella choleraesuis (strain SC-B67) protein is Protein-glutamate methylesterase/protein-glutamine glutaminase.